Reading from the N-terminus, the 91-residue chain is Cell division protein ZapA (91 aa).

Residues 58–91 are a coiled coil; the sequence is LTAVNIASEYLKLKEEYNRLREQLKKEKDGERDD.

Belongs to the ZapA family. Type 2 subfamily. Homodimer. Interacts with FtsZ.

It localises to the cytoplasm. Functionally, activator of cell division through the inhibition of FtsZ GTPase activity, therefore promoting FtsZ assembly into bundles of protofilaments necessary for the formation of the division Z ring. It is recruited early at mid-cell but it is not essential for cell division. This chain is Cell division protein ZapA, found in Geobacillus kaustophilus (strain HTA426).